The primary structure comprises 396 residues: Elongation factor Tu (396 aa).

The tr-type G domain maps to 10 to 206 (KLHVNVGTIG…ALDTHIPNPE (197 aa)). Residues 19-26 (GHVDHGKT) are G1. 19–26 (GHVDHGKT) serves as a coordination point for GTP. Mg(2+) is bound at residue Thr26. A G2 region spans residues 60–64 (GITIS). The segment at 81-84 (DCPG) is G3. GTP-binding positions include 81–85 (DCPGH) and 136–139 (NKAD). The tract at residues 136–139 (NKAD) is G4. The segment at 174-176 (SAL) is G5.

The protein belongs to the TRAFAC class translation factor GTPase superfamily. Classic translation factor GTPase family. EF-Tu/EF-1A subfamily. Monomer.

The protein localises to the cytoplasm. The enzyme catalyses GTP + H2O = GDP + phosphate + H(+). Its function is as follows. GTP hydrolase that promotes the GTP-dependent binding of aminoacyl-tRNA to the A-site of ribosomes during protein biosynthesis. This Xylella fastidiosa (strain Temecula1 / ATCC 700964) protein is Elongation factor Tu.